A 127-amino-acid chain; its full sequence is Modulator protein MzrA (127 aa).

The Cytoplasmic portion of the chain corresponds to 1 to 10; it reads MLKPRITARQ. The helical transmembrane segment at 11-31 threads the bilayer; that stretch reads LIWISAFLLMLTILMMTWSTL. Over 32–127 the chain is Periplasmic; the sequence is RQQESTLAIR…RLRESSHRFG (96 aa).

Belongs to the MzrA family. In terms of assembly, interacts with EnvZ.

It is found in the cell inner membrane. Modulates the activity of the EnvZ/OmpR two-component regulatory system, probably by directly modulating EnvZ enzymatic activity and increasing stability of phosphorylated OmpR. In Salmonella agona (strain SL483), this protein is Modulator protein MzrA.